Reading from the N-terminus, the 353-residue chain is Photosystem II protein D1 (353 aa).

Threonine 2 is subject to N-acetylthreonine. The residue at position 2 (threonine 2) is a Phosphothreonine. The next 3 helical transmembrane spans lie at 29-46, 118-133, and 142-156; these read YIGWFGVLMIPTLLTATS, HFLLGVACYMGREWEL, and WIAVAYSAPVAAATA. Histidine 118 contributes to the chlorophyll a binding site. Pheophytin a is bound at residue tyrosine 126. Positions 170 and 189 each coordinate [CaMn4O5] cluster. A helical membrane pass occupies residues 197 to 218; it reads FHMLGVAGVFGGSLFSAMHGSL. Histidine 198 is a binding site for chlorophyll a. Residues histidine 215 and 264–265 contribute to the a quinone site; that span reads SF. Histidine 215 is a binding site for Fe cation. Histidine 272 provides a ligand contact to Fe cation. The chain crosses the membrane as a helical span at residues 274–288; that stretch reads FLAAWPVVGIWFTAL. Residues histidine 332, glutamate 333, aspartate 342, and alanine 344 each coordinate [CaMn4O5] cluster. The propeptide occupies 345–353; it reads AIEAPSTNG.

It belongs to the reaction center PufL/M/PsbA/D family. In terms of assembly, PSII is composed of 1 copy each of membrane proteins PsbA, PsbB, PsbC, PsbD, PsbE, PsbF, PsbH, PsbI, PsbJ, PsbK, PsbL, PsbM, PsbT, PsbX, PsbY, PsbZ, Psb30/Ycf12, at least 3 peripheral proteins of the oxygen-evolving complex and a large number of cofactors. It forms dimeric complexes. It depends on The D1/D2 heterodimer binds P680, chlorophylls that are the primary electron donor of PSII, and subsequent electron acceptors. It shares a non-heme iron and each subunit binds pheophytin, quinone, additional chlorophylls, carotenoids and lipids. D1 provides most of the ligands for the Mn4-Ca-O5 cluster of the oxygen-evolving complex (OEC). There is also a Cl(-1) ion associated with D1 and D2, which is required for oxygen evolution. The PSII complex binds additional chlorophylls, carotenoids and specific lipids. as a cofactor. Post-translationally, tyr-161 forms a radical intermediate that is referred to as redox-active TyrZ, YZ or Y-Z. C-terminally processed by CTPA; processing is essential to allow assembly of the oxygen-evolving complex and thus photosynthetic growth.

It is found in the plastid. It localises to the chloroplast thylakoid membrane. It catalyses the reaction 2 a plastoquinone + 4 hnu + 2 H2O = 2 a plastoquinol + O2. Functionally, photosystem II (PSII) is a light-driven water:plastoquinone oxidoreductase that uses light energy to abstract electrons from H(2)O, generating O(2) and a proton gradient subsequently used for ATP formation. It consists of a core antenna complex that captures photons, and an electron transfer chain that converts photonic excitation into a charge separation. The D1/D2 (PsbA/PsbD) reaction center heterodimer binds P680, the primary electron donor of PSII as well as several subsequent electron acceptors. The chain is Photosystem II protein D1 from Petunia hybrida (Petunia).